A 707-amino-acid polypeptide reads, in one-letter code: Terpene cyclase/mutase atnI (707 aa).

Positions methionine 1–threonine 20 are enriched in polar residues. Positions methionine 1–glycine 22 are disordered. PFTB repeat units lie at residues alanine 130 to glycine 173, leucine 494 to threonine 535, threonine 571 to alanine 608, and serine 620 to alanine 661.

This sequence belongs to the terpene cyclase/mutase family.

It participates in secondary metabolite biosynthesis; terpenoid biosynthesis. Functionally, terpene cyclase/mutase; part of the gene cluster that mediates the biosynthesis of the meroterpenoids arthripenoids. The pathway begins with the HR-PKS atnH that catalyzes two chain-extension steps to form a reduced triketide, which then primes the SAT domain in the NR-PKS atnG to initiate three more cycles of extension to give a linear hexaketide corresponding to the polyketide part of arthripenoids. The FAD-dependent monooxygenase atnJ then performs an oxidative decarboxylation at C11 of the atnH/atnG product, via an electrophilic aromatic hydroxylation with concomitant ipso-decarboxylation. The membrane-bound polyprenyl transferase atnF then introduces a farnesyl group before the FAD-dependent monooxygenase atnK functions as the first epoxidase on terminal C12'-C13' olefin, followed by a second epoxidation on C7'-C8' catalyzed by atnA. The terpene cyclase/mutase atnI then initiates the sequential tricyclic ring formation through protonation of the terminal epoxide and catalyzes the regioselective and stereoselective 6/6/6-tricyclic ring formation. The cytochrome P450 monooxygenase atnM is responsible for hydroxylating both C1' and C10'. The next steps may involve ketoreduction and acetyl transfer by the ketoreductase atnB and the acetyltransferase atnC, and lead to the production of arthripenoid B, the final biosynthetic product of the atn cluster. The hydroquinone moiety in arthripenoid B is prone to undergo spontaneous oxidation to afford a benzoquinone compound, a key intermediate for generating structure diversity. For instance, addition of a cysteine followed by ring contraction gives arthripenoid A, tautomerization gives the main product arthripenoid C, addition of a molecular of water or amine affords arthripenoid D or E, respectively, and loss of one water forms arthripenoid F. The sequence is that of Terpene cyclase/mutase atnI from Arthrinium sp.